A 610-amino-acid polypeptide reads, in one-letter code: Butyryl-CoA dehydrogenase Swol_2052 (610 aa).

Residue Glu-451 is the Proton acceptor of the active site.

This sequence belongs to the acyl-CoA dehydrogenase family. FAD is required as a cofactor.

The protein resides in the cytoplasm. It carries out the reaction butanoyl-CoA + oxidized [electron-transfer flavoprotein] + H(+) = (2E)-butenoyl-CoA + reduced [electron-transfer flavoprotein]. The enzyme catalyses a short-chain 2,3-saturated fatty acyl-CoA + oxidized [electron-transfer flavoprotein] + H(+) = a short-chain (2E)-enoyl-CoA + reduced [electron-transfer flavoprotein]. Its pathway is lipid metabolism; butanoate metabolism. Involved in syntrophic growth of S.wolfei with butyrate, as part of the butyrate oxidation pathway. Catalyzes the oxidation of butanoyl-CoA to crotonyl-CoA. Probably passes the electrons released by this reaction on to electron-transfer flavoproteins (EtfAB) to finally generate hydrogen and/or formate. The chain is Butyryl-CoA dehydrogenase Swol_2052 from Syntrophomonas wolfei subsp. wolfei (strain DSM 2245B / Goettingen).